A 445-amino-acid polypeptide reads, in one-letter code: Trimethylamine monooxygenase (445 aa).

FAD contacts are provided by S14, E39, Q41, L47, W48, and H64. The NADP(+) site is built by W72 and N74. FAD is bound by residues N74 and V127. NADP(+) is bound by residues T204, S205, S207, and R228. The FAD site is built by Q317 and T320. R411 contributes to the NADP(+) binding site.

This sequence belongs to the FMO family. FAD is required as a cofactor.

The catalysed reaction is trimethylamine + NADPH + O2 = trimethylamine N-oxide + NADP(+) + H2O. Functionally, catalyzes the oxidation of trimethylamine (TMA) to produce trimethylamine N-oxide (TMAO). In vitro, has a broad substrate specificity, oxidizing many nitrogen- and sulfur-containing compounds, including dimethylamine (DMA), dimethylsulfide (DMS) and dimethylsulfoxide (DMSO). The protein is Trimethylamine monooxygenase of Roseovarius sp. (strain 217).